The following is a 236-amino-acid chain: MSLRQHQHPLIQRLADRIEAIWQAFFPLAPYALPEDLGYVEGKLEGERLTIENHCYQAPPFRKLHLELARVGESLDILHCVMFPEPRYDLPMFGCDLVGGRGQISAAIVDLSPVTGQLPAAYTCALNALPKLTFRQPRELPPWGHIFSPFCIFIRPQGEAEEQQFLDRIGEYLTLHCQLSQQAVPTDHPQAVIAGQRQYCQQQQQNDKTRRVLEKAFGVPWAERYMTTVLFDVPPV.

It belongs to the HY2 family.

The enzyme catalyses (2R,3Z)-phycocyanobilin + 4 oxidized [2Fe-2S]-[ferredoxin] = biliverdin IXalpha + 4 reduced [2Fe-2S]-[ferredoxin] + 4 H(+). In terms of biological role, catalyzes the four-electron reduction of biliverdin IX-alpha (2-electron reduction at both the A and D rings); the reaction proceeds via an isolatable 2-electron intermediate, 181,182-dihydrobiliverdin. The sequence is that of Phycocyanobilin:ferredoxin oxidoreductase (pcyA) from Thermosynechococcus vestitus (strain NIES-2133 / IAM M-273 / BP-1).